Consider the following 232-residue polypeptide: 7-cyano-7-deazaguanine synthase (232 aa).

7 to 17 (CSGGLDSVSLA) is a binding site for ATP. 4 residues coordinate Zn(2+): C185, C193, C196, and C199.

This sequence belongs to the QueC family. Zn(2+) is required as a cofactor.

The enzyme catalyses 7-carboxy-7-deazaguanine + NH4(+) + ATP = 7-cyano-7-deazaguanine + ADP + phosphate + H2O + H(+). It functions in the pathway purine metabolism; 7-cyano-7-deazaguanine biosynthesis. Functionally, catalyzes the ATP-dependent conversion of 7-carboxy-7-deazaguanine (CDG) to 7-cyano-7-deazaguanine (preQ(0)). This chain is 7-cyano-7-deazaguanine synthase, found in Chelativorans sp. (strain BNC1).